The primary structure comprises 260 residues: Flavin-dependent thymidylate synthase (260 aa).

Residues 2–203 (ISVKLVSYTN…PRLFKYTGPN (202 aa)) enclose the ThyX domain. FAD-binding positions include S56, 80–82 (RHR), and Q88. DUMP is bound by residues 77–80 (QLVR), 88–92 (QMSHR), and R142. Residues 80–90 (RHRIASYTQMS) carry the ThyX motif motif. Residues 158–160 (NAR) and N164 contribute to the FAD site. Position 169 (R169) interacts with dUMP. The active-site Involved in ionization of N3 of dUMP, leading to its activation is R169.

The protein belongs to the thymidylate synthase ThyX family. As to quaternary structure, homotetramer. Requires FAD as cofactor.

It catalyses the reaction dUMP + (6R)-5,10-methylene-5,6,7,8-tetrahydrofolate + NADPH + H(+) = dTMP + (6S)-5,6,7,8-tetrahydrofolate + NADP(+). Its pathway is pyrimidine metabolism; dTTP biosynthesis. In terms of biological role, catalyzes the reductive methylation of 2'-deoxyuridine-5'-monophosphate (dUMP) to 2'-deoxythymidine-5'-monophosphate (dTMP) while utilizing 5,10-methylenetetrahydrofolate (mTHF) as the methyl donor, and NADPH and FADH(2) as the reductant. This is Flavin-dependent thymidylate synthase from Saccharolobus solfataricus (strain ATCC 35092 / DSM 1617 / JCM 11322 / P2) (Sulfolobus solfataricus).